The sequence spans 162 residues: uncharacterized protein (162 aa).

Residues 5-25 (IIILFLFTAILCSITLCGCIS) form a helical membrane-spanning segment.

The protein resides in the membrane. This is an uncharacterized protein from Methanocaldococcus jannaschii (strain ATCC 43067 / DSM 2661 / JAL-1 / JCM 10045 / NBRC 100440) (Methanococcus jannaschii).